Here is a 168-residue protein sequence, read N- to C-terminus: ATP synthase subunit b (168 aa).

The helical transmembrane segment at 9-29 (AIPFGTIAYTLVVFLILLVML) threads the bilayer.

The protein belongs to the ATPase B chain family. F-type ATPases have 2 components, F(1) - the catalytic core - and F(0) - the membrane proton channel. F(1) has five subunits: alpha(3), beta(3), gamma(1), delta(1), epsilon(1). F(0) has three main subunits: a(1), b(2) and c(10-14). The alpha and beta chains form an alternating ring which encloses part of the gamma chain. F(1) is attached to F(0) by a central stalk formed by the gamma and epsilon chains, while a peripheral stalk is formed by the delta and b chains.

Its subcellular location is the cell membrane. Its function is as follows. F(1)F(0) ATP synthase produces ATP from ADP in the presence of a proton or sodium gradient. F-type ATPases consist of two structural domains, F(1) containing the extramembraneous catalytic core and F(0) containing the membrane proton channel, linked together by a central stalk and a peripheral stalk. During catalysis, ATP synthesis in the catalytic domain of F(1) is coupled via a rotary mechanism of the central stalk subunits to proton translocation. Functionally, component of the F(0) channel, it forms part of the peripheral stalk, linking F(1) to F(0). This is ATP synthase subunit b from Bacillus cytotoxicus (strain DSM 22905 / CIP 110041 / 391-98 / NVH 391-98).